A 579-amino-acid chain; its full sequence is SHC-transforming protein 1 (579 aa).

Methionine 1 carries the N-acetylmethionine modification. Positions 1 to 137 (MDLLPPKPKY…QLGGEEWTRH (137 aa)) are disordered. Residues 16 to 44 (ESLSSLEEGASGSTPPEELPSPSASSLGP) show a composition bias toward low complexity. 2 positions are modified to phosphoserine: serine 36 and serine 139. Lysine 154 carries the post-translational modification N6-acetyllysine. The PID domain maps to 156–339 (MGPGVSYLVR…AGFDGSAWDE (184 aa)). The disordered stretch occupies residues 337 to 357 (WDEEEEEPPDHQYYNDFPGKE). Residues 340 to 483 (EEEEPPDHQY…SMAEQLQGEP (144 aa)) form a CH1 region. A phosphotyrosine mark is found at tyrosine 349, tyrosine 350, and tyrosine 423. The segment at 432-451 (ARQAGGGAGPPNPSLNGSAP) is disordered. Position 449 is a phosphoserine (serine 449). An SH2 domain is found at 484–575 (WFHGKLSRRE…GSELCLQQPV (92 aa)).

Interacts with CPNE3; this interaction may mediate the binding of CPNE3 with ERBB2. Interacts with the NPXY motif of tyrosine-phosphorylated IGF1R and INSR in vitro via the PID domain. Once activated, binds to GRB2. Interacts with tyrosine-phosphorylated DDR2 and CD3T. Interacts with the N-terminal region of APS. Interacts with GRB7 and KIT. Interacts with PTK2/FAK1. Interacts with phosphorylated LRP1 and IRS4. Interacts with FLT4 (tyrosine-phosphorylated). Interacts with PDGFRB (tyrosine-phosphorylated). Interacts with ERBB4. Interacts with TEK/TIE2 (tyrosine-phosphorylated). Interacts with ALK, GAB2, TRIM31, INPP5D/SHIP1 and INPPL1/SHIP2. Interacts with PTPN6/SHP (tyrosine phosphorylated). Identified in a complex containing FGFR4, NCAM1, CDH2, PLCG1, FRS2, SRC, SHC1, GAP43 and CTTN. Interacts with EPHB1 and GRB2; activates the MAPK/ERK cascade to regulate cell migration. Interacts with the Trk receptors NTRK1, NTRK2 and NTRK3; in a phosphotyrosine-dependent manner. Interacts with CEACAM1; this interaction is CEACAM1-phosphorylation-dependent and mediates interaction with EGFR or INSR resulting in decrease coupling of SHC1 to the MAPK3/ERK1-MAPK1/ERK2 pathway. Interacts (via PID domain) with PEAK1 (when phosphorylated at 'Tyr-1177'). Found in a complex with PPP1CA, PPP1CC, SHC1 and PEAK1. Post-translationally, phosphorylated in response to FLT4 signaling. Tyrosine phosphorylated by ligand-activated PDGFRB. May be tyrosine phosphorylated by activated PTK2/FAK1. Tyrosine phosphorylated by TEK/TIE2. Tyrosine phosphorylated by activated PTK2B/PYK2. Dephosphorylation by PTPN2 may regulate interaction with GRB2. Phosphorylated by activated epidermal growth factor receptor. Phosphorylated in response to KIT signaling. Isoform p47Shc and isoform p52Shc are phosphorylated on tyrosine residues of the Pro-rich domain. Isoform p66Shc is phosphorylated on Ser-36 by PRKCB upon treatment with insulin, hydrogen peroxide or irradiation with ultraviolet light. FLT3 signaling promotes tyrosine phosphorylation of isoform p47Shc and isoform p52Shc. Also tyrosine phosphorylated by ligand-activated ALK. In terms of tissue distribution, widely expressed. Expressed in neural stem cells but absent in mature neurons.

It localises to the cytoplasm. It is found in the cell junction. Its subcellular location is the focal adhesion. The protein localises to the mitochondrion matrix. The protein resides in the mitochondrion. Its function is as follows. Signaling adapter that couples activated growth factor receptors to signaling pathways. Participates in signaling downstream of the angiopoietin receptor TEK/TIE2, and plays a role in the regulation of endothelial cell migration and sprouting angiogenesis. Participates in a signaling cascade initiated by activated KIT and KITLG/SCF. Isoform p47Shc and isoform p52Shc, once phosphorylated, couple activated receptor kinases to Ras via the recruitment of the GRB2/SOS complex and are implicated in the cytoplasmic propagation of mitogenic signals. Isoform p47Shc and isoform p52 may thus function as initiators of the Ras signaling cascade in various non-neuronal systems. Isoform p66Shc does not mediate Ras activation, but is involved in signal transduction pathways that regulate the cellular response to oxidative stress and life span. Isoform p66Shc acts as a downstream target of the tumor suppressor p53 and is indispensable for the ability of stress-activated p53 to induce elevation of intracellular oxidants, cytochrome c release and apoptosis. The expression of isoform p66Shc has been correlated with life span. The polypeptide is SHC-transforming protein 1 (Shc1) (Mus musculus (Mouse)).